A 973-amino-acid chain; its full sequence is UvrABC system protein A (973 aa).

Glycine 34–serine 41 contacts ATP. 2 consecutive ABC transporter domains span residues tryptophan 331 to leucine 609 and proline 629 to lysine 958. Glycine 662–serine 669 serves as a coordination point for ATP. A C4-type zinc finger spans residues cysteine 761 to cysteine 787.

This sequence belongs to the ABC transporter superfamily. UvrA family. Forms a heterotetramer with UvrB during the search for lesions.

The protein localises to the cytoplasm. Functionally, the UvrABC repair system catalyzes the recognition and processing of DNA lesions. UvrA is an ATPase and a DNA-binding protein. A damage recognition complex composed of 2 UvrA and 2 UvrB subunits scans DNA for abnormalities. When the presence of a lesion has been verified by UvrB, the UvrA molecules dissociate. The protein is UvrABC system protein A of Rhizobium meliloti (strain 1021) (Ensifer meliloti).